The chain runs to 377 residues: RIB43A-like with coiled-coils protein 2 (377 aa).

Coiled-coil stretches lie at residues 217–250 and 282–308; these read NKNQ…LRGD and EEIR…RDMD.

It belongs to the RIB43A family. Microtubule inner protein component of sperm flagellar doublet microtubules. In terms of tissue distribution, expressed in trachea multiciliated cells.

Its subcellular location is the cytoplasm. The protein localises to the cytoskeleton. It localises to the cilium axoneme. It is found in the flagellum axoneme. Its function is as follows. Microtubule inner protein (MIP) part of the dynein-decorated doublet microtubules (DMTs) in cilia axoneme, which is required for motile cilia beating. This Bos taurus (Bovine) protein is RIB43A-like with coiled-coils protein 2.